Reading from the N-terminus, the 453-residue chain is Aldehyde dehydrogenase, dimeric NADP-preferring (453 aa).

An N-acetylserine modification is found at Ser-2. Lys-178 is modified (N6-acetyllysine). 188–193 (GSTGVG) serves as a coordination point for NAD(+). Residue Lys-194 is modified to N6-acetyllysine. Residues Glu-210 and Cys-244 contribute to the active site.

This sequence belongs to the aldehyde dehydrogenase family. As to quaternary structure, homodimer. High levels in stomach, esophagus and lung; low level in the liver and kidney.

The protein localises to the cytoplasm. The enzyme catalyses an aldehyde + NAD(+) + H2O = a carboxylate + NADH + 2 H(+). The catalysed reaction is octanal + NAD(+) + H2O = octanoate + NADH + 2 H(+). Functionally, ALDHs play a major role in the detoxification of alcohol-derived acetaldehyde. They are involved in the metabolism of corticosteroids, biogenic amines, neurotransmitters, and lipid peroxidation. Oxidizes medium and long chain aldehydes into non-toxic fatty acids. Preferentially oxidizes aromatic aldehyde substrates. Comprises about 50 percent of corneal epithelial soluble proteins. May play a role in preventing corneal damage caused by ultraviolet light. The sequence is that of Aldehyde dehydrogenase, dimeric NADP-preferring (ALDH3A1) from Homo sapiens (Human).